A 152-amino-acid polypeptide reads, in one-letter code: Xanthine-guanine phosphoribosyltransferase (152 aa).

5-phospho-alpha-D-ribose 1-diphosphate is bound by residues 37-38, Arg-69, and 88-96; these read RG and DDLVDSGDT. A GMP-binding site is contributed by Arg-69. Residue Asp-89 participates in Mg(2+) binding. Residues Asp-92 and Ile-135 each contribute to the guanine site. The xanthine site is built by Asp-92 and Ile-135. GMP contacts are provided by residues 92–96 and 134–135; these read DSGDT and WI.

It belongs to the purine/pyrimidine phosphoribosyltransferase family. XGPT subfamily. As to quaternary structure, homotetramer. Mg(2+) is required as a cofactor.

Its subcellular location is the cell inner membrane. The enzyme catalyses GMP + diphosphate = guanine + 5-phospho-alpha-D-ribose 1-diphosphate. The catalysed reaction is XMP + diphosphate = xanthine + 5-phospho-alpha-D-ribose 1-diphosphate. It carries out the reaction IMP + diphosphate = hypoxanthine + 5-phospho-alpha-D-ribose 1-diphosphate. It functions in the pathway purine metabolism; GMP biosynthesis via salvage pathway; GMP from guanine: step 1/1. Its pathway is purine metabolism; XMP biosynthesis via salvage pathway; XMP from xanthine: step 1/1. Purine salvage pathway enzyme that catalyzes the transfer of the ribosyl-5-phosphate group from 5-phospho-alpha-D-ribose 1-diphosphate (PRPP) to the N9 position of the 6-oxopurines guanine and xanthine to form the corresponding ribonucleotides GMP (guanosine 5'-monophosphate) and XMP (xanthosine 5'-monophosphate), with the release of PPi. To a lesser extent, also acts on hypoxanthine. In Aliivibrio salmonicida (strain LFI1238) (Vibrio salmonicida (strain LFI1238)), this protein is Xanthine-guanine phosphoribosyltransferase.